Here is a 222-residue protein sequence, read N- to C-terminus: 2-C-methyl-D-erythritol 4-phosphate cytidylyltransferase (222 aa).

This sequence belongs to the IspD/TarI cytidylyltransferase family. IspD subfamily.

The catalysed reaction is 2-C-methyl-D-erythritol 4-phosphate + CTP + H(+) = 4-CDP-2-C-methyl-D-erythritol + diphosphate. It functions in the pathway isoprenoid biosynthesis; isopentenyl diphosphate biosynthesis via DXP pathway; isopentenyl diphosphate from 1-deoxy-D-xylulose 5-phosphate: step 2/6. Catalyzes the formation of 4-diphosphocytidyl-2-C-methyl-D-erythritol from CTP and 2-C-methyl-D-erythritol 4-phosphate (MEP). This is 2-C-methyl-D-erythritol 4-phosphate cytidylyltransferase from Porphyromonas gingivalis (strain ATCC BAA-308 / W83).